A 466-amino-acid polypeptide reads, in one-letter code: Putative multidrug resistance protein MdtD (466 aa).

14 consecutive transmembrane segments (helical) span residues 11 to 31 (LWIV…VNTA), 48 to 68 (SVIV…GWLA), 71 to 91 (IGVK…SLLC), 105 to 125 (VIQG…VMKI), 137 to 157 (FVTL…GFLV), 164 to 184 (WIFL…WFLM), 194 to 214 (FDIS…LALD), 218 to 238 (SLGI…IALL), 262 to 282 (FSIG…LPFM), 292 to 312 (GFSP…SMGI), 328 to 347 (VLVA…ALVA), 351 to 370 (WIWM…AIRF), 402 to 422 (SLGV…HIAA), and 429 to 449 (TVFL…ALIF).

Belongs to the major facilitator superfamily. TCR/Tet family.

The protein localises to the cell inner membrane. The sequence is that of Putative multidrug resistance protein MdtD from Pectobacterium atrosepticum (strain SCRI 1043 / ATCC BAA-672) (Erwinia carotovora subsp. atroseptica).